Consider the following 661-residue polypeptide: Cyclic di-GMP phosphodiesterase PdeR (661 aa).

Residues 109–179 (GLSFAEQVVS…RRNNRVFFRS (71 aa)) form the PAS domain. Positions 265-397 (NKVGVVYLDL…GRGQFCVFTP (133 aa)) constitute a GGDEF domain. Positions 406–658 (YLWLDTNLRK…AFERWYKRYL (253 aa)) constitute an EAL domain.

In terms of assembly, interacts with DgcM and MlrA.

It catalyses the reaction 3',3'-c-di-GMP + H2O = 5'-phosphoguanylyl(3'-&gt;5')guanosine + H(+). Part of a signaling cascade that regulates curli biosynthesis. The cascade is composed of two cyclic-di-GMP (c-di-GMP) control modules, in which c-di-GMP controlled by the DgcE/PdeH pair (module I) regulates the activity of the DgcM/PdeR pair (module II), which in turn regulates activity of the transcription factor MlrA and expression of the master biofilm regulator csgD. PdeR acts as a trigger enzyme that connects modules I and II. It inhibits DgcM and MlrA by direct interaction. Inhibition is relieved when PdeR binds and degrades c-di-GMP generated by module I. This Escherichia coli (strain K12) protein is Cyclic di-GMP phosphodiesterase PdeR.